The following is a 355-amino-acid chain: Probable dual-specificity RNA methyltransferase RlmN (355 aa).

Catalysis depends on glutamate 92, which acts as the Proton acceptor. Positions 98-330 (FHYGLSVCVT…TELGINCGVR (233 aa)) constitute a Radical SAM core domain. Cysteine 105 and cysteine 341 form a disulfide bridge. Residues cysteine 112, cysteine 116, and cysteine 119 each coordinate [4Fe-4S] cluster. Residues 164-165 (GE), serine 196, 219-221 (SLH), and asparagine 297 each bind S-adenosyl-L-methionine. The active-site S-methylcysteine intermediate is the cysteine 341.

This sequence belongs to the radical SAM superfamily. RlmN family. Requires [4Fe-4S] cluster as cofactor.

It localises to the cytoplasm. The enzyme catalyses adenosine(2503) in 23S rRNA + 2 reduced [2Fe-2S]-[ferredoxin] + 2 S-adenosyl-L-methionine = 2-methyladenosine(2503) in 23S rRNA + 5'-deoxyadenosine + L-methionine + 2 oxidized [2Fe-2S]-[ferredoxin] + S-adenosyl-L-homocysteine. The catalysed reaction is adenosine(37) in tRNA + 2 reduced [2Fe-2S]-[ferredoxin] + 2 S-adenosyl-L-methionine = 2-methyladenosine(37) in tRNA + 5'-deoxyadenosine + L-methionine + 2 oxidized [2Fe-2S]-[ferredoxin] + S-adenosyl-L-homocysteine. In terms of biological role, specifically methylates position 2 of adenine 2503 in 23S rRNA and position 2 of adenine 37 in tRNAs. The chain is Probable dual-specificity RNA methyltransferase RlmN from Oceanobacillus iheyensis (strain DSM 14371 / CIP 107618 / JCM 11309 / KCTC 3954 / HTE831).